A 270-amino-acid polypeptide reads, in one-letter code: MLLRSLRSWAARSPRSVGPGSSGSPGSLDSGAGPLWAPRRAWPPDKDRENDKEKKAVVCIEGNIASGKTTCLEFFSNTTDVEVLMEPVLKWRNVHGHNPLSLMYHDASRWGLTLQTYVQLTMLDQHTRPQMSPVRLMERSIYSARYIFVENLYRGGKMPEVDYAILSEWFDWIVRNIDVSVDLIVYLRTTPEICYQRLKMRCREEEKVIPMEYLHAIHRLYEEWLVNGSLFPAAAPVLVIEADHNLEKMLELFEQNRARILTPENWKHGP.

Residues 1-38 constitute a mitochondrion transit peptide; it reads MLLRSLRSWAARSPRSVGPGSSGSPGSLDSGAGPLWAP. The interval 1 to 54 is disordered; it reads MLLRSLRSWAARSPRSVGPGSSGSPGSLDSGAGPLWAPRRAWPPDKDRENDKEK. Residues 13 to 34 show a composition bias toward low complexity; it reads SPRSVGPGSSGSPGSLDSGAGP. The span at 42–54 shows a compositional bias: basic and acidic residues; it reads WPPDKDRENDKEK. 62–70 lines the ATP pocket; that stretch reads GNIASGKTT. Catalysis depends on Glu-138, which acts as the Proton acceptor.

This sequence belongs to the DCK/DGK family. Homodimer. As to expression, found in most tissues; highly expressed in liver.

The protein localises to the mitochondrion. It carries out the reaction thymidine + ATP = dTMP + ADP + H(+). It catalyses the reaction 2'-deoxycytidine + ATP = dCMP + ADP + H(+). The enzyme catalyses 2'-deoxyuridine + ATP = dUMP + ADP + H(+). Phosphorylates thymidine, deoxycytidine, and deoxyuridine in the mitochondrial matrix. In non-replicating cells, where cytosolic dNTP synthesis is down-regulated, mtDNA synthesis depends solely on TK2 and DGUOK. This Mus musculus (Mouse) protein is Thymidine kinase 2, mitochondrial (Tk2).